Reading from the N-terminus, the 123-residue chain is Large ribosomal subunit protein bL12 (123 aa).

It belongs to the bacterial ribosomal protein bL12 family. In terms of assembly, homodimer. Part of the ribosomal stalk of the 50S ribosomal subunit. Forms a multimeric L10(L12)X complex, where L10 forms an elongated spine to which 2 to 4 L12 dimers bind in a sequential fashion. Binds GTP-bound translation factors.

In terms of biological role, forms part of the ribosomal stalk which helps the ribosome interact with GTP-bound translation factors. Is thus essential for accurate translation. The protein is Large ribosomal subunit protein bL12 of Finegoldia magna (strain ATCC 29328 / DSM 20472 / WAL 2508) (Peptostreptococcus magnus).